The sequence spans 488 residues: uncharacterized protein (488 aa).

12 consecutive transmembrane segments (helical) span residues 2 to 22 (FGLP…VFLV), 27 to 47 (VHAF…GGMS), 59 to 79 (FGGT…MGSV), 106 to 126 (LAIT…FVIL), 176 to 196 (IGAM…GIVL), 241 to 261 (LLPI…HLFV), 275 to 295 (IVSF…ISVY), 314 to 334 (VKTA…GAVL), 347 to 367 (IANL…LVRF), 368 to 388 (IQGS…PILA), 438 to 458 (VPTT…NLIF), and 461 to 481 (DGSV…LFYI).

The protein belongs to the GntP permease family.

It localises to the cell inner membrane. This is an uncharacterized protein from Haemophilus influenzae (strain ATCC 51907 / DSM 11121 / KW20 / Rd).